The chain runs to 130 residues: Phosphoribosyl-AMP cyclohydrolase (130 aa).

Residue Asp77 participates in Mg(2+) binding. Cys78 contacts Zn(2+). Positions 79 and 81 each coordinate Mg(2+). Zn(2+)-binding residues include Cys95 and Cys102.

The protein belongs to the PRA-CH family. In terms of assembly, homodimer. The cofactor is Mg(2+). Zn(2+) is required as a cofactor.

It is found in the cytoplasm. It catalyses the reaction 1-(5-phospho-beta-D-ribosyl)-5'-AMP + H2O = 1-(5-phospho-beta-D-ribosyl)-5-[(5-phospho-beta-D-ribosylamino)methylideneamino]imidazole-4-carboxamide. The protein operates within amino-acid biosynthesis; L-histidine biosynthesis; L-histidine from 5-phospho-alpha-D-ribose 1-diphosphate: step 3/9. In terms of biological role, catalyzes the hydrolysis of the adenine ring of phosphoribosyl-AMP. The polypeptide is Phosphoribosyl-AMP cyclohydrolase (Pseudomonas syringae pv. syringae (strain B728a)).